Consider the following 141-residue polypeptide: Small ribosomal subunit protein bS6 (141 aa).

Residues 96 to 141 are disordered; it reads VTGQSEMLKAEENRSERRERRERPEHADSAEGDDSNDSDSSDNADE. Positions 103-124 are enriched in basic and acidic residues; sequence LKAEENRSERRERRERPEHADS. Over residues 125–141 the composition is skewed to acidic residues; sequence AEGDDSNDSDSSDNADE.

The protein belongs to the bacterial ribosomal protein bS6 family.

In terms of biological role, binds together with bS18 to 16S ribosomal RNA. This is Small ribosomal subunit protein bS6 from Pseudomonas putida (strain ATCC 700007 / DSM 6899 / JCM 31910 / BCRC 17059 / LMG 24140 / F1).